A 286-amino-acid chain; its full sequence is Putative L-ribulose-5-phosphate 3-epimerase SgbU (286 aa).

This sequence belongs to the L-ribulose-5-phosphate 3-epimerase family.

It carries out the reaction L-ribulose 5-phosphate = L-xylulose 5-phosphate. In terms of biological role, catalyzes the isomerization of L-xylulose-5-phosphate to L-ribulose-5-phosphate. The chain is Putative L-ribulose-5-phosphate 3-epimerase SgbU (sgbU) from Haemophilus influenzae (strain ATCC 51907 / DSM 11121 / KW20 / Rd).